We begin with the raw amino-acid sequence, 317 residues long: Inositol oxygenase 2 (317 aa).

Residues Arg57 and 115-117 contribute to the substrate site; that span reads DES. Fe cation is bound by residues His128, His153, and Asp154. Substrate is bound by residues Lys157 and 174-175; that span reads GD. The Fe cation site is built by His226, His252, and Asp285. 252-253 provides a ligand contact to substrate; the sequence is HS.

This sequence belongs to the myo-inositol oxygenase family. It depends on Fe cation as a cofactor. In terms of tissue distribution, expressed mainly in roots, stems, flowers and siliques. Low expression in leaves.

Its subcellular location is the cytoplasm. The enzyme catalyses myo-inositol + O2 = D-glucuronate + H2O + H(+). The protein operates within polyol metabolism; myo-inositol degradation into D-glucuronate; D-glucuronate from myo-inositol: step 1/1. Its function is as follows. Involved in the biosynthesis of UDP-glucuronic acid (UDP-GlcA), providing nucleotide sugars for cell-wall polymers. May be also involved in plant ascorbate biosynthesis. The sequence is that of Inositol oxygenase 2 (MIOX2) from Arabidopsis thaliana (Mouse-ear cress).